Consider the following 436-residue polypeptide: Mannan endo-1,4-beta-mannosidase F (436 aa).

The signal sequence occupies residues 1 to 18 (MRSLSSVALLSAIGAASA). The CBM1 domain maps to 19–54 (QAGPWGQCAGISHTGPTTCESGWSCVYLNDWYSQCQ). Positions 60 to 88 (SSSTTVSSTKQPSSTVAAPSSTTSAHTLP) are disordered. The tract at residues 79–113 (SSTTSAHTLPTGSGSFAKTDGLKFNIDGKTKYFAG) is ser-rich linker. Positions 114-436 (TNAYWLPFLT…CAVIDHISQI (323 aa)) are catalytic. Residues Trp-146 and Asn-260 each contribute to the substrate site. Catalysis depends on Glu-261, which acts as the Proton donor. Residue Tyr-336 participates in substrate binding. Glu-370 acts as the Nucleophile in catalysis. Residue Trp-400 coordinates substrate.

Belongs to the glycosyl hydrolase 5 (cellulase A) family.

The protein localises to the secreted. It carries out the reaction Random hydrolysis of (1-&gt;4)-beta-D-mannosidic linkages in mannans, galactomannans and glucomannans.. Endo-1,4-mannanase, a crucial enzyme for depolymerization of seed galactomannans and wood galactoglucomannans. The chain is Mannan endo-1,4-beta-mannosidase F (manF) from Aspergillus clavatus (strain ATCC 1007 / CBS 513.65 / DSM 816 / NCTC 3887 / NRRL 1 / QM 1276 / 107).